The primary structure comprises 236 residues: Probable sulfate/thiosulfate import ATP-binding protein CysA (236 aa).

In terms of domain architecture, ABC transporter spans I3 to L233. ATP is bound at residue G35 to S42.

It belongs to the ABC transporter superfamily. Sulfate/tungstate importer (TC 3.A.1.6) family.

It localises to the plastid. Its subcellular location is the chloroplast. The enzyme catalyses sulfate(out) + ATP + H2O = sulfate(in) + ADP + phosphate + H(+). It catalyses the reaction thiosulfate(out) + ATP + H2O = thiosulfate(in) + ADP + phosphate + H(+). Part of the ABC transporter complex involved in sulfate/thiosulfate import. Responsible for energy coupling to the transport system. The chain is Probable sulfate/thiosulfate import ATP-binding protein CysA from Chlorella vulgaris (Green alga).